We begin with the raw amino-acid sequence, 280 residues long: Ribonuclease Z (280 aa).

Residues H61, H63, D65, H66, H153, D176, and H240 each contribute to the Zn(2+) site. D65 (proton acceptor) is an active-site residue.

It belongs to the RNase Z family. Homodimer. Zn(2+) serves as cofactor.

The catalysed reaction is Endonucleolytic cleavage of RNA, removing extra 3' nucleotides from tRNA precursor, generating 3' termini of tRNAs. A 3'-hydroxy group is left at the tRNA terminus and a 5'-phosphoryl group is left at the trailer molecule.. Its function is as follows. Zinc phosphodiesterase, which displays some tRNA 3'-processing endonuclease activity. Probably involved in tRNA maturation, by removing a 3'-trailer from precursor tRNA. The protein is Ribonuclease Z of Mycobacterium bovis (strain BCG / Pasteur 1173P2).